A 271-amino-acid chain; its full sequence is Calcium-binding protein 4 (271 aa).

Residues 1 to 105 (MATEHNVQLV…RSDPQQDAAQ (105 aa)) are disordered. Ser-37 carries the phosphoserine; by PKC/PRKCZ modification. A compositionally biased stretch (low complexity) spans 45 to 67 (GSQKASSGDQSSSQGSEASGSSK). A compositionally biased stretch (basic residues) spans 87 to 96 (ASHRHSHRHR). EF-hand domains follow at residues 125 to 160 (EELE…LGYM), 179 to 196 (GFVD…KLRE), 202 to 237 (LGVR…LLGE), and 239 to 271 (LEGT…LSTG). Ca(2+)-binding residues include Asp-138, Asp-140, Asp-142, Tyr-144, and Glu-149. Ca(2+) is bound by residues Asp-215, Asp-217, Asp-219, Arg-221, Glu-226, Asp-252, Asn-254, Asp-256, Thr-258, and Glu-263.

As to quaternary structure, interacts with CACNA1F and CACNA1D (via IQ domain) in a calcium independent manner. Interacts (via N-terminus) with UNC119. Post-translationally, phosphorylated. Phosphorylation levels change with the light conditions and regulate the activity, but has no effect on calcium binding. Expressed in retina and in the inner hair cells (IHC) of the cochlea.

The protein localises to the cytoplasm. The protein resides in the presynapse. Its function is as follows. Involved in normal synaptic function through regulation of Ca(2+) influx and neurotransmitter release in photoreceptor synaptic terminals and in auditory transmission. Modulator of CACNA1D and CACNA1F, suppressing the calcium-dependent inactivation and shifting the activation range to more hyperpolarized voltages. This chain is Calcium-binding protein 4 (Cabp4), found in Mus musculus (Mouse).